A 241-amino-acid polypeptide reads, in one-letter code: MALCCFAFSAPCLHLRSRRSCSSCFLLATSAAFFSARLLRRAFSSSFLFKYSAVCFSSSFSRSFFRFLFSSARRCRSRCVSPRGGAFSPGGPRRSRPRLSSSKDSKPSSTASSSSLSFNSSSKDNSPSTNSSTSRSSGHDTGKHRNSPADTKLTMLIISPLPRVWTESSFRIPSLRVWRLCTRRLVPHLWGTMFGPPTSSRPTGHLSRASDHLGPHRWTRYRLSSTVPYPSTPLLPHPENL.

2 short sequence motifs (nuclear localization signal) span residues 73-78 and 91-98; these read RRCRSR and GPRRSRPR. 2 stretches are compositionally biased toward low complexity: residues 79-100 and 107-136; these read CVSP…PRLS and PSST…TSRS. Residues 79–151 are disordered; the sequence is CVSPRGGAFS…GKHRNSPADT (73 aa). The Mitochondrial targeting signal signature appears at 175–184; it reads LRVWRLCTRR.

It belongs to the HTLV-1 accessory protein p30II family. P30II binds to the KIX domains of CREBBP and EP300.

The protein localises to the host nucleus. It is found in the host nucleolus. The protein resides in the host mitochondrion inner membrane. In terms of biological role, p30II is a multifunctional regulator that sequesters EP300/CREBBP and down-regulates CREB-responsive element (CRE) and Tax-responsive element (TRE) mediated transcription. Specifically binds and represses tax/rex mRNA nuclear export. Since Tax and Rex are positive regulators of viral gene expression, their inhibition by p30II reduces virion production, and allows the virus to escape the host immune surveillance and persist latently in an immune-competent host. Its function is as follows. p13II increases mitochondrial permeability to monovalent cations, producing a rapid, membrane potential-dependent influx of potassium. This could involve a channel-forming activity. Interferes with cell proliferation and transformation and promotes apoptosis induced by ceramide and Fas ligand, probably using the Ras signaling. The chain is Accessory protein p30II from Human T-cell leukemia virus 1 (strain Japan ATK-1 subtype A) (HTLV-1).